We begin with the raw amino-acid sequence, 18562 residues long: Titin homolog (18562 aa).

The region spanning 90 to 176 (PKFIQVIKAY…GVSTSYGYIT (87 aa)) is the Ig-like 1 domain. Positions 384–404 (RFHPQPPKPPRAGTSRRFLPE) are disordered. 4 consecutive Ig-like domains span residues 406 to 493 (PKFV…TQVT), 821 to 913 (PKIV…AFIN), 943 to 1038 (PKFI…LTIS), and 1135 to 1225 (PRFE…LTVD). Cysteines 842 and 897 form a disulfide. The tract at residues 1336 to 1360 (LPPVQKSMSVQEEKASSQRTPSPMN) is disordered. Positions 1679–1762 (PKFLRKLVNC…ASNVAGTTFS (84 aa)) constitute an Ig-like 6 domain. An intrachain disulfide couples Cys-1700 to Cys-1751. Coiled coils occupy residues 1766-1786 (LKLSEADDDAVDLLRQLSEIK), 2011-2038 (QSLDDQIKVTQQILKDVERDLNKMERTS), and 2065-2085 (ISDQLADRQSSEEALREALQE). The disordered stretch occupies residues 2155-2177 (RKGSDKDKRKATRIKRVPSAHSA). Over residues 2163–2172 (RKATRIKRVP) the composition is skewed to basic residues. The stretch at 2205–2231 (LKQNEEAKEIQELFVKIEKEINTIAEL) forms a coiled coil. 2 disordered regions span residues 2298 to 2459 (IIGI…TADA) and 2614 to 2637 (KSSLKAAEEDEKEGEEEGEEEVTA). The span at 2309–2323 (RRPSSTPRGSTRSSN) shows a compositional bias: low complexity. Residues 2324 to 2341 (LTTSQDSQATTKMTVSSE) are compositionally biased toward polar residues. The stretch at 2606 to 2630 (LMQTLASEKSSLKAAEEDEKEGEEE) forms a coiled coil. Over residues 2621 to 2636 (EEDEKEGEEEGEEEVT) the composition is skewed to acidic residues. Ig-like domains lie at 3095 to 3177 (KEVM…SGLY) and 3179 to 3264 (TERS…SFVS). The interval 3362 to 3692 (EVPKVAEPSE…NAEAQKVVDS (331 aa)) is disordered. The span at 3655–3665 (SEEETPLEETN) shows a compositional bias: acidic residues. 3 Ig-like domains span residues 3789 to 3878 (PVFT…CEIV), 3897 to 3985 (PHFV…CTID), and 4038 to 4125 (PPYF…CVLT). 2 disulfide bridges follow: Cys-3919–Cys-3969 and Cys-4059–Cys-4109. 14 disordered regions span residues 4553-4599 (QSRE…SAPT), 4634-4699 (TVEP…EIVE), 4750-4814 (GSTA…TSEV), 4826-4855 (PVPETSAPSVEPTVEKLAPAESKETSEVQP), 4912-4931 (STAAPAQEPTVEKLAPVESK), 4950-4969 (PETSAPTVEPTVEKLKPVES), 4989-5216 (PETS…EILE), 5267-5294 (GSTAAPAQEPTVEKLAPVESKETSEVEP), 5306-5325 (PETSAPTVEPTVEKLKSVES), 5345-5372 (PETSAPTVEPTVEKLAPVDSKETSEVEP), 5428-6101 (GSTA…VEPT), 6127-6157 (VQVPETSSPTVEPTVEKLAPVESKETSEVQP), 6214-6900 (STAA…ETSE), and 6930-8453 (APVE…DDKL). The segment covering 4555–4577 (RELDNTERNFTVNKEKDESKKPS) has biased composition (basic and acidic residues). PVET repeat units lie at residues 4599-4626 (TVEKLAPVESKETPEVQAAEIVEQKDVP), 4627-4665 (VPETRAPTVEPTVEKHTPVDSKETSEVEPAEIVEQKDVP), 4666-4704 (VPETSAPTVEPTVEKHTPVESKEKSEVQPAEIVEQKDVT), 4755-4787 (PAQEPTVEKLAPVESKETSEVEPAEIVEQKDVP), 4788-4826 (VPETSAPSVEPTVEKLAPVESKETSEVQQAEIVEQKDVP), 4827-4865 (VPETSAPSVEPTVEKLAPAESKETSEVQPAEIVEQKDVT), 4917-4948 (AQEPTVEKLAPVESKETSEVQQAEIIEQKDVP), 4949-4987 (VPETSAPTVEPTVEKLKPVESKETSEVQQVEIIEQKDVP), 4988-5026 (VPETSAPTVEPTVEKLAPVESKETSEVQQAEIIEQKDVP), 5027-5065 (VPETSAPTVEPTVEKLKPVESKETSEVQQVEIIEQKDVP), 5066-5104 (VPETSAPTVEPTVEKLAPVESKETSEVQQAEIIEQKDVP), 5105-5143 (VPETSAPTVEPTVEKLKPVESKETSEVQQVEIIEQKDVP), 5144-5182 (VPETSAPTVEPTVEKHAPVESKETSEVQPAEIVEQKVVP), 5183-5221 (VPETSAPTVEPTVEKLAPVESKETPEVQPAEILEQKDVT), 5273-5304 (AQEPTVEKLAPVESKETSEVEPAEIVEQKDVP), 5305-5343 (VPETSAPTVEPTVEKLKSVESKETSEVQQAEIIEQKDVP), 5344-5382 (VPETSAPTVEPTVEKLAPVDSKETSEVEPAEIVEQKDVT), 5434-5465 (AQEPTVEKLAPVESKETSEVEPAEIVEQKDVP), 5466-5504 (VPETSAPTVEPTVEKLKSVESKETSEVQQAEIIEQKDVP), 5505-5543 (VPETSAPTVEPTVEKHAPVESKETSEVQPAEIVEQKVVP), 5544-5582 (VPETSAPTVEPTVEKLAPVESKETSEVEPAEIVEQKDVP), 5583-5621 (VPETSAPTVEPTVEKLAPVESKETSEVEPAEIVEQKDVP), 5622-5660 (VPETSAPTVEPTIEKLAPVESKETSEVEPAEIVEQKDVS), 5661-5699 (VPETSAPTVEPTIEKLAPVESKETSEVEPAEIVEQKDVS), 5700-5738 (VPETSAPTVEPTVEKLAPVESKETSEVEPAEIVEQKDVP), 5739-5777 (VPETSAPTVEPTVEKLAPVESKETSEVQPAEIVEHKDVQ), 5778-5816 (VPETSSPTVEPTVEKLAPVESKETSEVEPAEIVEQKDVP), 5817-5855 (VPETSAPTVEPTVEKLAPVESKETSEVEPAEIVEQKDVP), 5856-5894 (VPETSAPTVEPTVEKLAPVESKETSEVQPAEIVEQKDVS), 5895-5933 (VPETSAPTVEPTVEKLAPVESKETSEVQPAEIVEQKDVP), 5934-5972 (VPETSAPTVEPTVEKLAPVESKETSEVQPAEIVEHKDVQ), 5973-6011 (VPETSSPTVEPTVEKLAPVESKETSEVEPAEIVEQKDVP), 6012-6050 (VPETSAPTVEPTVEKLAPVESKETSEVQPAEIVEHKDVQ), 6051-6089 (VPETSAPTVEPTIEKLAPVESKETSEVEPAEIVEQKDVS), 6090-6128 (VPETSAPTVEPTIEKLAPVESKETSEVQPAEIVEHKDVQ), 6129-6167 (VPETSSPTVEPTVEKLAPVESKETSEVQPAEIVEQKDVT), 6219-6250 (AHEPTVEKLAPVESKETSEVEPAEIVEQKDVP), 6251-6289 (VPETSAPTVEPTVEKLAPVESKETSEVEPAEIVEQKDLP), 6290-6328 (VPETSAPTVEPTVEKLAPVESKKTSEVEPAEIVEQKDVP), 6329-6367 (VPETSAPTVEPTVEKLAPVESKETSEVEPAEIVEQKDVP), 6368-6406 (VPETSAPTVEPTVEKLAPVESKETSEVEPAEIVEQKDVP), 6407-6445 (VPETSAPTVEPTIEKLAPVESKETSEVEPAEIVEQKDVS), 6446-6484 (VPETSAPTVEPTIEKLAPVESKETSEVEPAEIVEQKDVS), 6485-6523 (VPETSAPTVEPTVEKLAPVESKETSEVEPAEIVEQKDVP), 6524-6562 (VPETSAPTVEPTVEKLAPVESKETSEVQPAEIVEHKDVQ), 6563-6601 (VPETSSPTVEPTVEKLAPVESKETSEVEPAEIVEQKDVP), 6602-6640 (VPETSAPTVEPTVEKLAPVESKETSEVEPAEIVEQKDVP), 6641-6679 (VPETSAPTVEPTVEKLAPVESKETSEVQPAEIVEHKDVQ), 6680-6718 (VPETTATTFEPTKEKLAPVDSKETSEVQTAEIVEQKDVP), 6719-6757 (VPETSATTVEPTKEKLAPGESKETSEVQQAAIVEQKDVA), 6758-6796 (VPETSATTVEPTKEKLAPVESKETSEIQTAEIVEQKDVP), 6797-6835 (VPETSTSYVEPTKEKLAPGESKETSEVQQAAIVEQKDVP), 6836-6874 (VPETSATTVEPTKEKLAPVESKETSEIQQAAVVEQKDVP), 6875-6913 (VPETSATTVEPTKEKLAPVESKETSEVQQAAIVEQKDVP), 6914-6952 (VPEANAPTFEPTVEKLAPVESKETSEVQQAAIVEQKDVP), and 6953-6991 (VPEANAPTVEPTVEKLAPVESKETSVESKETQADAKLKK). Basic and acidic residues-rich tracts occupy residues 4638 to 4651 (TVEKHTPVDSKETS) and 4677 to 4691 (TVEKHTPVESKEKSE). Positions 4960-4969 (TVEKLKPVES) are enriched in basic and acidic residues. Residues 5038-5051 (TVEKLKPVESKETS) are compositionally biased toward basic and acidic residues. Composition is skewed to basic and acidic residues over residues 5116 to 5129 (TVEKLKPVESKETS) and 5155 to 5168 (TVEKHAPVESKETS). Residues 5212-5235 (AEILEQKDVTCEEEIKELLTEVEV) are a coiled coil. The segment covering 5316–5325 (TVEKLKSVES) has biased composition (basic and acidic residues). 2 stretches are compositionally biased toward basic and acidic residues: residues 5477–5490 (TVEKLKSVESKETS) and 5516–5529 (TVEKHAPVESKETS). Composition is skewed to basic and acidic residues over residues 6690-6704 (PTKEKLAPVDSKETS), 6729-6743 (PTKEKLAPGESKETS), 6768-6782 (PTKEKLAPVESKETS), 6807-6821 (PTKEKLAPGESKETS), 6846-6860 (PTKEKLAPVESKETS), and 6885-6899 (PTKEKLAPVESKETS). 4 stretches are compositionally biased toward basic and acidic residues: residues 6972–7606 (ESKE…DNFK), 7613–7630 (LQKEKDDKLKQEKDDNFK), 7637–8062 (LQKE…DNFK), and 8069–8453 (LQKE…DDKL). Residues 6984-7812 (QADAKLKKEK…DKLKQETDAK (829 aa)) adopt a coiled-coil conformation. 96 BLUE repeats span residues 6992-6996 (EKDDK), 6997-7012 (HKQEADAKLQKENDDK), 7013-7028 (LKQEADAKLKKENDDK), 7029-7044 (LKQEADAKLKKENDDK), 7045-7060 (LKQEADAKLKKENDDK), 7061-7076 (LKQEAAAKLKKENDDK), 7077-7092 (LKQEADAKLKKENDDK), 7093-7108 (LKQEADAKLQKENDDK), 7109-7124 (LKQEADAKLQKENDDK), 7125-7140 (LKQEADAKLQKENDDK), 7141-7156 (LKQEADAKLQKENDDK), 7157-7172 (LKQEADAKLQKENDDK), 7173-7188 (LKQEADAKLKKENDDK), 7189-7204 (LKQEADAKLKKEKHDK), 7205-7220 (LKQEADAKLQKENDDK), 7221-7236 (LKQEADAKLQKENDDK), 7237-7252 (LKQEADAKLQKEKDDK), 7253-7268 (LKQEADAKLKKEKDDK), 7269-7284 (LKQDADAKLQKEKDDK), 7285-7300 (LKQEADAKLKKEKDDK), 7301-7316 (LKHEADAKLQKEKDDK), 7317-7332 (LKQEADAKLKKEKDDR), 7333-7348 (LKKDADAKLQKEKDDK), 7349-7364 (LKQEADAKLKKEKDDK), 7365-7380 (LKHEADAKLQKEKDDK), 7381-7396 (LKQEADAKLKKEKDDK), 7397-7412 (LKQEADAKLQKEKDDK), 7413-7428 (LKQEADAKLKKEKDDK), 7429-7444 (LKQEADAKLQKEKDDK), 7445-7460 (LKQEADAKLKKEKDDK), 7461-7476 (LKQEADAKLQKEKDDK), 7477-7492 (LKQEADAKLKKEKDDK), 7493-7508 (LKQEADAKLKKEKDDK), 7509-7524 (LKQDADAKLQKEKDDK), 7525-7540 (LKQEADAKLKKEKDDK), 7541-7556 (LKHEADAKLKKEKDDK), 7557-7572 (LKQEADAKLKKEKDDK), 7573-7588 (LKQDADAKLKKEKDDK), 7589-7604 (LKHEADAKLQKEKDDN), 7605-7620 (FKQEANAKLQKEKDDK), 7621-7628 (LKQEKDDN), 7629-7644 (FKQEANAKLQKEKDDK), 7645-7652 (LKQEKDDK), 7653-7668 (LKQEADAKLKKEKDDK), 7669-7684 (LKQEADAKLKKEKDDK), 7685-7700 (LKQEADAKLKKDKDDK), 7701-7716 (LKQEADAKLKKEKDDK), 7717-7732 (LKQEADAKLKKDKDDK), 7733-7748 (LKQEADAKLKKDKDDK), 7749-7764 (LKQEADAKLKKEKDDK), 7765-7772 (LKQEKNDK), 7773-7788 (LKQEADAKLKKEKDDK), 7789-7804 (LKQEADAKLKKEKDDK), 7805-7820 (LKQETDAKLKKDKDDK), 7821-7836 (LKQEADAKLKKDKDDK), 7837-7852 (LKQEADAKLKKDKDDK), 7853-7868 (LKQEADGKLKKEKDNK), 7869-7884 (LKQEADGKLKKEKDNK), 7885-7900 (LKQEADAKLKKEKDDK), 7901-7916 (LKQEADAKLKKEKDDK), 7917-7932 (LKQEADAKLKKDKDDK), 7933-7948 (LKQEADAKLKKEKDDK), 7949-7964 (LKQEADAKLKKDKDDK), 7965-7980 (LKQEANAKLQKEKDDK), 7981-7996 (LKQEADAKLQKEKDDK), 7997-8012 (LKQEADAKLKKEKDDK), 8013-8028 (LKQEADAKLQKEKDDK), 8029-8044 (LKQEADAKLKKEKDDK), 8045-8060 (LKQEADAKLQKEKDDN), 8061-8076 (FKQEANAKLQKEKDDK), 8077-8084 (LKQEKDDK), 8085-8100 (LKQEADAKLKKEKDDK), 8101-8116 (LKQEADAKLKKDKDDK), 8117-8132 (LKQEADAKLKKEKDDK), 8133-8148 (LKQEADAKLKKEKDDK), 8149-8164 (LKQEADAKLKKDKDDK), 8165-8180 (LKQEADAKLKKDKDDK), 8181-8196 (LKQEADAKLKKEKDDK), 8197-8212 (LKQETDAKLKKDKDDK), 8213-8228 (LKQEADAKLKKEKDDK), 8229-8244 (LKQEADAKLKKEKDDK), 8245-8260 (LKQEADAKLKKEKDDK), 8261-8276 (LKQEADAKLKKDKDDK), 8277-8292 (LKQEADAKLKKDKDDK), 8293-8308 (LKQEADGKLKKEKDNK), 8309-8324 (LKQEADGKLKKEKDNK), 8325-8340 (LKQEADAKLKKEKDDK), 8341-8356 (LKQEADAKLKKDKDDK), 8357-8371 (LKQEADAKLKKEKDD), 8373-8388 (LKQEADAKLKKEKDDK), 8389-8404 (LKQEADAKLKKDKDDK), 8405-8420 (LKQEADAKLKKDKDDK), 8421-8436 (LKQEADAKLKKEKDDK), 8437-8452 (LKQEADAKLKKDKDDK), 8453-8468 (LKQEADAKLKKDKDDK), and 8469-8484 (LKQEADAKLKKEKGDK). Residues 7876 to 8273 (KLKKEKDNKL…EADAKLKKDK (398 aa)) adopt a coiled-coil conformation. The stretch at 8316–8490 (KLKKEKDNKL…KGDKLKLEDQ (175 aa)) forms a coiled coil. The span at 8599–8611 (KHLKKKKKHHKKE) shows a compositional bias: basic residues. The disordered stretch occupies residues 8599–8626 (KHLKKKKKHHKKEKIAVKETEQDEKTVS). The span at 8612-8626 (KIAVKETEQDEKTVS) shows a compositional bias: basic and acidic residues. One can recognise a Fibronectin type-III 1 domain in the interval 8950–9041 (KPRKAQLVAL…EIIEVNTLDY (92 aa)). Disordered stretches follow at residues 9079–9104 (IEEHRKLKKKSKKSKKTTDEPELDSE), 9147–9436 (VQKI…AAAE), 9481–9609 (EEQS…ETES), 9702–10224 (ADAV…ESRI), 10239–10274 (ESDDLSTASTIKLQKESDESGIDSRMGQTSEAEDSP), 10539–11018 (QSAP…DSFT), 11030–11111 (EDAV…QKDQ), 11123–11213 (KKLA…QDKT), 11225–11387 (AKTT…SLTS), 11420–11592 (KGLN…NPEL), 11624–11825 (LTKK…SDNL), 11872–11955 (LSAH…TSLS), 11996–12054 (TNLI…LQKN), 12397–12418 (GRRVMEASSDSELDDAKKRKKR), 12537–12974 (EESR…PAES), 13026–13045 (EAAKKQKEKDEQLKLETEVV), 13065–13261 (AAEA…LNDK), 13283–13514 (QAQA…EQLK), 13553–13574 (EEKQRLESEAATKKADAEKLKL), and 13594–13874 (EKLA…RRTG). A compositionally biased stretch (basic residues) spans 9084–9093 (KLKKKSKKSK). Composition is skewed to basic and acidic residues over residues 9172-9184 (VKKDDKDVNKKSL) and 9191-9202 (TKKEIQGKPEKK). The segment covering 9213–9231 (SSISETSETLTKDLTQTKQ) has biased composition (polar residues). Over residues 9232–9267 (SEPEPAKRTTETSVQDEVKRKTETTSKSKQTTEEHP) the composition is skewed to basic and acidic residues. Positions 9273–9283 (SDSSISSTSDA) are enriched in low complexity. Residues 9295 to 9332 (EAQKVTEKPETAKLESKSKMTEDTTKESDNKETVDEKP) show a composition bias toward basic and acidic residues. A compositionally biased stretch (low complexity) spans 9346–9359 (STISETSETSAVES). The stretch at 9371–9510 (AAVDKEKKQK…QTKAKAAEKQ (140 aa)) forms a coiled coil. Composition is skewed to basic and acidic residues over residues 9373 to 9436 (VDKE…AAAE) and 9481 to 9521 (EEQS…KSNK). The span at 9547-9558 (SSISQKSDTSKT) shows a compositional bias: low complexity. Residues 9577–9749 (TSKQKETDKK…QTVEEQAKLD (173 aa)) adopt a coiled-coil conformation. Basic and acidic residues-rich tracts occupy residues 9578-9609 (SKQKETDKKQKLEAEITAKKSADEKSKLETES) and 9702-9783 (ADAV…DEKP). The segment covering 9798–9809 (SISQKSVTSKTV) has biased composition (polar residues). 3 stretches are compositionally biased toward basic and acidic residues: residues 9819–10004 (ETQK…DEKP), 10040–10149 (ETQK…KSEN), and 10162–10196 (VKSEPKKSDKTETVEKEVASSTEKSDDSKTKEPKE). 2 coiled-coil regions span residues 9822 to 9995 (KVAD…TEEA) and 10046 to 10129 (EADK…TSKK). A compositionally biased stretch (basic residues) spans 10197–10206 (KKKIIKKKKD). The segment covering 10207–10224 (TTKPQEASKELSSDESRI) has biased composition (basic and acidic residues). A compositionally biased stretch (polar residues) spans 10239 to 10250 (ESDDLSTASTIK). Residues 10461–10553 (KPTSLQVTST…DTIEATTQAE (93 aa)) form the Fibronectin type-III 2 domain. Basic and acidic residues predominate over residues 10566–10609 (EKVKEPVSKKPENTKESEGHKKRDRKESEDHDENNLGKSGKDEF). Positions 10612-10637 (SGESGTSNQNEESAQLNTSFTSTEQH) are enriched in polar residues. Residues 10663-10680 (IDADVVEVEYDEQGDDIP) show a composition bias toward acidic residues. A compositionally biased stretch (basic and acidic residues) spans 10707-10716 (MAEKDSDAME). Positions 10779 to 10790 (ADQTGMSIQDLN) are enriched in polar residues. 2 stretches are compositionally biased toward basic and acidic residues: residues 10840-10852 (QLDKSQEVEDDKM) and 10863-10884 (KKPESREVSGGKSEKSKEKESD). Over residues 10961-10975 (LSTSEQVENASQNLG) the composition is skewed to polar residues. Basic and acidic residues-rich tracts occupy residues 10999-11009 (IHGEAESKLGE), 11045-11055 (SAEKTSLEVRD), and 11076-11089 (SNRDETSMEIRDLN). Positions 11018–11064 (TLQDLYEELKAKEDAVEAGAETSNADQSAEKTSLEVRDMKKKMKKKQ) form a coiled coil. Residues 11090–11108 (TQHSNQTGEDESSTFNFGQ) are compositionally biased toward polar residues. Over residues 11159–11173 (KKGEENEKTKFEAKH) the composition is skewed to basic and acidic residues. Low complexity predominate over residues 11174–11187 (LGSSSASDSLAEST). Composition is skewed to basic and acidic residues over residues 11195–11211 (KGEVEKSELSIDMKNQD), 11271–11280 (IPDKNRDSDK), and 11295–11318 (ESAEAQKNESPEVKEISSFEEKTL). Residues 11374–11387 (SKVTTSFADESLTS) show a composition bias toward polar residues. Composition is skewed to basic and acidic residues over residues 11440-11464 (KVKDSDSLSSTDKKIGLKKSDKDQK) and 11472-11485 (GSKDQESVGYEEKT). Over residues 11503-11515 (MTDQKNVQESQYA) the composition is skewed to polar residues. Basic and acidic residues-rich tracts occupy residues 11624–11635 (LTKKQDENDAKK), 11645–11669 (AKKDSDTLSITSKKDKFGKRQDSRE), and 11722–11735 (VSEKGHDTYSEKTV). Residues 11754–11767 (ESLNASSALSTTDV) are compositionally biased toward polar residues. Residues 11916–11937 (AEDKYVESRKKTTLKKKPEQKQ) show a composition bias toward basic and acidic residues. A coiled-coil region spans residues 12408–12428 (ELDDAKKRKKRRIKRVVERRN). Residues 12432–12547 (PRLTQLIPPR…ESRDDDKSVD (116 aa)) enclose the Ig-like 12 domain. Basic and acidic residues-rich tracts occupy residues 12537 to 12547 (EESRDDDKSVD), 12555 to 12567 (LEEKKDDGDDKSK), and 12609 to 12689 (VGAK…KKDA). Low complexity predominate over residues 12690 to 12701 (SQPSSSKESSPP). Positions 12729–12740 (TMHSETNITTTI) are enriched in polar residues. Basic and acidic residues-rich tracts occupy residues 12766–12839 (ESAK…KNKS), 12852–12865 (ETKKDVSEIEEVPK), and 12889–12940 (PADD…DDKS). The stretch at 12797-12828 (KKSEKKDEVTAEKQSTEALIESKKKEVDESKI) forms a coiled coil. A coiled-coil region spans residues 12980–13103 (AEVNKAKKQK…LKLEEESAAK (124 aa)). 7 stretches are compositionally biased toward basic and acidic residues: residues 13065 to 13124 (AAEA…KAGE), 13133 to 13145 (PTSKKTIDTKDVG), 13176 to 13191 (TDSEKVSKQKEQDEPT), 13203 to 13261 (EADK…LNDK), 13283 to 13327 (QAQA…EKQA), 13337 to 13354 (AVKKQKELDEKNKLEANK), and 13361 to 13416 (LKIE…DEKP). Residues 13237-13380 (LDAQEKIKKV…SKQTVEEQAK (144 aa)) adopt a coiled-coil conformation. Residues 13431–13442 (SISQKSETSKTV) are compositionally biased toward polar residues. Over residues 13452-13514 (ETQKVADAAR…KQKEKDEQLK (63 aa)) the composition is skewed to basic and acidic residues. The stretch at 13455–13628 (KVADAARKQK…ETKSKQTEEA (174 aa)) forms a coiled coil. Over residues 13594–13637 (EKLAQEQSRLEDEAKKSAEKQKLESETKSKQTEEAPKESVDEKP) the composition is skewed to basic and acidic residues. Residues 13651–13662 (SSISQKSKSAKS) show a composition bias toward low complexity. Residues 13684–13696 (KVEQSPDESTSAT) are compositionally biased toward polar residues. Residues 13697-13735 (IKRDPAQKTEEISKQDDGDEKKTTTDGKPPKPEDSEATP) show a composition bias toward basic and acidic residues. The span at 13747–13760 (SDSVASDASLADVS) shows a compositional bias: low complexity. Residues 13761-13770 (KLSDDVEEKP) show a composition bias toward basic and acidic residues. Residues 13784 to 13793 (SVISETSSVD) are compositionally biased toward polar residues. Basic and acidic residues-rich tracts occupy residues 13795–13808 (IKPESVEIPTEKAE) and 13824–13843 (SEPKNAHKDDTEKTTDDMMT). Positions 13963 to 14036 (PVDFVKYLPR…RAKYEDSGKY (74 aa)) constitute an Ig-like 13 domain. Fibronectin type-III domains lie at 14153-14247 (APGD…TGSP), 14253-14348 (VEFP…TVEG), and 14350-14448 (VPEI…VLAD). Ig-like domains are found at residues 14451 to 14542 (PRVL…VGIS), 14550 to 14634 (SSFS…VIVN), and 14638 to 14727 (PHIL…LVFE). Cys-14568 and Cys-14618 are oxidised to a cystine. 2 consecutive Fibronectin type-III domains span residues 14826–14920 (APCD…TLES) and 14937–15027 (ILRT…LVPG). The tract at residues 15011-15180 (VSSPSEETNP…TGKETTEKKK (170 aa)) is disordered. Basic and acidic residues-rich tracts occupy residues 15034 to 15060 (KTEKKTDAAKSESEQKSAEEIVAEKQV) and 15085 to 15117 (KVAENKGEETLQEVKEKLKKGKAVEKVQDESRR). Over residues 15118 to 15132 (GSLQASSDNESVTTT) the composition is skewed to polar residues. Residues 15133–15177 (SEKRSEAELEKNSEKSAEKKSTSADLEAADKAETEKSETGKETTE) are compositionally biased toward basic and acidic residues. Ig-like domains follow at residues 15180-15274 (KKVV…VSIA) and 15283-15371 (PKVE…IALR). Fibronectin type-III domains follow at residues 15383–15475 (PTGP…LKKK) and 15503–15596 (QIGK…TTES). The disordered stretch occupies residues 15470–15503 (TTLKKKEETGKQKSEKSESDEKKSESDKVSELKQ). The segment covering 15473–15503 (KKKEETGKQKSEKSESDEKKSESDKVSELKQ) has biased composition (basic and acidic residues). Ig-like domains lie at 15599–15687 (PAFT…CKLT) and 15692–15786 (PEIN…IQVT). Positions 15791-15883 (APGKPAVEDQ…DESELVVVKN (93 aa)) constitute a Fibronectin type-III 10 domain. In terms of domain architecture, Protein kinase spans 15934–16189 (YIIHEELGKG…VQDALRHPWI (256 aa)). ATP-binding positions include 15940 to 15948 (LGKGAYGTV) and Lys-15963. Asp-16055 acts as the Proton acceptor in catalysis. Residues 16206-16264 (KMQPKLDKSGVPARQKRNFLSLKRWSDDLLPIGRLAKRGAIFRRLTMDGVFERNIAFDT) form an autoinhibitory domain region. 4 consecutive Ig-like domains span residues 16268-16358 (PSVK…AKLS), 16500-16575 (GKQL…VAKN), 16605-16692 (PRFR…FSVV), and 16705-16789 (PKFL…KDFT). 4 disulfide bridges follow: Cys-16290/Cys-16342, Cys-16508/Cys-16571, Cys-16627/Cys-16677, and Cys-16726/Cys-16778. The tract at residues 16805–16827 (LTPVRSRSRSRSRSPSVVGGEIQ) is disordered. Ig-like domains lie at 16829–16918 (PPVV…AIVV), 16932–17025 (PTFV…LTIS), and 17037–17126 (PYFI…TEVS). The interval 17121-17169 (QNTEVSVTKSKEVKEKKEKKKVEKKDEGKKKPGRPGLPRPSGASKTEQV) is disordered. The segment covering 17129 to 17150 (KSKEVKEKKEKKKVEKKDEGKK) has biased composition (basic and acidic residues). The 92-residue stretch at 17154–17245 (RPGLPRPSGA…MTSTLKTASV (92 aa)) folds into the Fibronectin type-III 11 domain. 11 consecutive Ig-like domains span residues 17249-17336 (PQFT…CQVT), 17358-17447 (PTLQ…CNVA), 17457-17548 (PSFS…VMIA), 17570-17661 (PRFT…TQVI), 17676-17765 (PKFT…QATT), 17782-17873 (PRFV…LNVS), 18008-18097 (PKFM…SEID), 18121-18213 (PNFI…LQVS), 18224-18316 (PPLF…MQLD), 18329-18417 (PRVF…LELT), and 18429-18519 (PKFN…MILS). Cystine bridges form between Cys-17379/Cys-17431 and Cys-17478/Cys-17530. Cys-17697 and Cys-17754 form a disulfide bridge. The cysteines at positions 18143 and 18195 are disulfide-linked.

It belongs to the protein kinase superfamily. CAMK Ser/Thr protein kinase family. As to quaternary structure, interacts (via C-terminus) with myosin. Interacts with actin. Mg(2+) is required as a cofactor. Expression is restricted to body wall, enteric and vulval muscles.

It localises to the cytoplasm. It is found in the myofibril. The protein resides in the sarcomere. Its subcellular location is the a band. The protein localises to the i band. It localises to the nucleus membrane. The catalysed reaction is L-seryl-[protein] + ATP = O-phospho-L-seryl-[protein] + ADP + H(+). It carries out the reaction L-threonyl-[protein] + ATP = O-phospho-L-threonyl-[protein] + ADP + H(+). Functionally, serine/threonine-protein kinase. Key component in the assembly and functioning of muscles. By providing connections at the level of individual microfilaments, it contributes to the fine balance of forces between the two halves of the sarcomere. The size and extensibility of the cross-links are the main determinants of sarcomere extensibility properties of muscle. In non-muscle cells, seems to play a role in chromosome condensation and chromosome segregation during mitosis. Might link the lamina network to chromatin or nuclear actin, or both during interphase. The chain is Titin homolog from Caenorhabditis elegans.